A 66-amino-acid chain; its full sequence is UPF0434 protein Nwi_0075 (66 aa).

The protein belongs to the UPF0434 family.

The protein is UPF0434 protein Nwi_0075 of Nitrobacter winogradskyi (strain ATCC 25391 / DSM 10237 / CIP 104748 / NCIMB 11846 / Nb-255).